A 263-amino-acid polypeptide reads, in one-letter code: MARGPKKHLKRVAAPKHWMLDKLTGVFAPRPSTGPHKLRECLPLIIFLRNRLKYALTGDEVKKICMQRFIKIDGKVRTDITYPAGFMDVISIDKTGENFRLIYDTKGRFAVHRITPEEAKYKLCKVRKIFVGTKGIPHLVTHDARTIRYPDPLIKVNDTIQIDLETGKITDFIKFDTGNLCMVTGGANLGRIGVITNRERHPGSFDVVHVKDANGNSFATRLSNIFVIGKGNKPWISLPRGKGIRLTIAEERDKRLAAKQSSG.

One can recognise an S4 RNA-binding domain in the interval 42–104; that stretch reads LPLIIFLRNR…TGENFRLIYD (63 aa).

The protein belongs to the eukaryotic ribosomal protein eS4 family.

In Bos taurus (Bovine), this protein is Small ribosomal subunit protein eS4 (RPS4).